The following is a 164-amino-acid chain: Interferon gamma (164 aa).

A signal peptide spans 1–19; that stretch reads MTCQTYNLFVLSVIMIYYG. Asn-42 and Asn-61 each carry an N-linked (GlcNAc...) asparagine glycan.

This sequence belongs to the type II (or gamma) interferon family. Homodimer.

It localises to the secreted. Produced by lymphocytes activated by specific antigens or mitogens. IFN-gamma, in addition to having antiviral activity, has important immunoregulatory functions. It is a potent activator of macrophages, it has antiproliferative effects on transformed cells and it can potentiate the antiviral and antitumor effects of the type I interferons. This is Interferon gamma (IFNG) from Phasianus colchicus colchicus (Black-necked pheasant).